Reading from the N-terminus, the 459-residue chain is Methylenetetrahydrofolate--tRNA-(uracil-5-)-methyltransferase TrmFO (459 aa).

15–20 (GAGLAG) is an FAD binding site.

The protein belongs to the MnmG family. TrmFO subfamily. The cofactor is FAD.

The protein localises to the cytoplasm. The catalysed reaction is uridine(54) in tRNA + (6R)-5,10-methylene-5,6,7,8-tetrahydrofolate + NADH + H(+) = 5-methyluridine(54) in tRNA + (6S)-5,6,7,8-tetrahydrofolate + NAD(+). It carries out the reaction uridine(54) in tRNA + (6R)-5,10-methylene-5,6,7,8-tetrahydrofolate + NADPH + H(+) = 5-methyluridine(54) in tRNA + (6S)-5,6,7,8-tetrahydrofolate + NADP(+). Functionally, catalyzes the folate-dependent formation of 5-methyl-uridine at position 54 (M-5-U54) in all tRNAs. The chain is Methylenetetrahydrofolate--tRNA-(uracil-5-)-methyltransferase TrmFO from Syntrophotalea carbinolica (strain DSM 2380 / NBRC 103641 / GraBd1) (Pelobacter carbinolicus).